Here is a 2042-residue protein sequence, read N- to C-terminus: Protein mini spindles (2042 aa).

TOG regions lie at residues 1-229 and 267-505; these read MAED…VEPS and MDLL…KVAG. The tract at residues 1–505 is binds tubulin; the sequence is MAEDTEYKKL…KAEIKIKVAG (505 aa). 2 promotes microtubule polymerization regions span residues 1 to 516 and 581 to 1080; these read MAED…ASAP and TPEE…EKAR. 7 HEAT repeats span residues 120–157, 160–197, 270–311, 315–353, 357–394, 396–433, and 440–478; these read EKQE…EFGH, IGVK…WIGA, LDPV…DHPK, GEYG…GLAK, NYAS…STSL, AQQE…TALN, and LTTS…VTPL. Positions 498–821 are association with microtubule lattice; it reads EIKIKVAGPK…PKPVRGVQRS (324 aa). The tract at residues 506–572 is disordered; sequence PKKETRPASA…PTAALKAGGK (67 aa). Residues 513–531 are compositionally biased toward low complexity; sequence ASAPTAKAAAPAKTVAGSV. Residues 581–814 form a TOG 3 region; it reads TPEELQEKSE…KNVGEKPPKP (234 aa). 4 HEAT repeats span residues 587–624, 625–662, 672–710, and 745–782; these read EKSE…SGFD, AKQA…IIRS, TTVD…LEYV, and LQPK…YMGK. The interval 804-849 is disordered; it reads DKNVGEKPPKPVRGVQRSSGGTAGNSPDNEDDDGGAAGEEEPINMA. The segment covering 819-830 has biased composition (polar residues); the sequence is QRSSGGTAGNSP. Positions 831-845 are enriched in acidic residues; sequence DNEDDDGGAAGEEEP. 2 TOG regions span residues 849-1087 and 1179-1415; these read ADLL…PVKP and TELL…KPTP. 4 HEAT repeats span residues 856 to 893, 896 to 933, 937 to 974, and 1017 to 1054; these read DIAP…EARL, PSIG…AMGA, NHVR…KGGY, and EDIH…HLGF. Residues 1083–1140 form a disordered region; that stretch reads LPVKPLPKGKHQAPIPEEPKLKTVRGGGAGGAPGIQKSATARVAGGQDKQVPARKKDE. Residues 1099–1428 are association with microtubule lattice; the sequence is EEPKLKTVRG…VDVPAPQRHD (330 aa). 4 HEAT repeats span residues 1205-1242, 1272-1309, 1311-1344, and 1346-1383; these read RYHL…RFYD, NEGS…VFPF, KVFG…SYGM, and ICPQ…LSGE. 2 disordered regions span residues 1407 to 1455 and 1940 to 1959; these read AKKT…TFDQ and NAGS…NGPD. The segment covering 1940–1957 has biased composition (polar residues); the sequence is NAGSTQDNRTDVNYQNNG.

It belongs to the TOG/XMAP215 family. Interacts with tacc, dgt6. Interacts with mv. Interacts with Patronin.

Its subcellular location is the cytoplasm. The protein resides in the cytoskeleton. It localises to the microtubule organizing center. The protein localises to the centrosome. It is found in the spindle. Its subcellular location is the perinuclear region. Functionally, binds to the plus end of microtubules and regulates microtubule dynamics and microtubule organization. Function in neurons is essential for adult survival, and is important for climbing behavior and activity. Promotes cytoplasmic microtubule nucleation and elongation. May act as a microtubule antipause factor that rapidly catalyzes the transition from pause to either growth or shrinkage. Involved in mitotic spindle elongation. Involved in the establishment of cell polarity and mitotic spindle orientation in neuroblasts. Required for maintaining the bipolarity of acentrosomal meiotic spindles; the function is dependent on tacc and involves ncd. Involved in oocyte microtubule cytoskeleton organization and bicoid mRNA localization. Seems to be involved in elongation of kinetochore-derived microtubule fibers. In fat body cells, essential component of perinuclear non-centrosomal microtubule-organizing centers (ncMTOCs) which function to accommodate the organization of microtubule (MT) networks to control nuclear positioning and dynein motor-based retrograde endosomal trafficking. Within the ncMTOCs, Msp300 and shot anchors the ncMTOC at the nuclear surface and recruits the MT minus-end regulators Patronin and Nin for assembly, anchoring and/or stabilization of circumferential and radial MTs at the ncMTOCs. Patronin, and perhaps Nin, then recruits msps to the ncMTOC where it is required for the gamma-tubulin-independent elongation and assembly of radial MTs. This chain is Protein mini spindles (msps), found in Drosophila melanogaster (Fruit fly).